Reading from the N-terminus, the 173-residue chain is Photosystem I assembly protein Ycf3 (173 aa).

3 TPR repeats span residues 35-68, 72-105, and 120-153; these read AFAYYRDGMSAQADGEYAEALENYYEALNLEDDP, SYILYNIGLIHASNGEHDQALEYYHQALENNPRM, and GEKAKETGNSRDANSYFDQAAEYWKQAISLAPNN.

This sequence belongs to the Ycf3 family.

The protein localises to the cellular thylakoid membrane. Functionally, essential for the assembly of the photosystem I (PSI) complex. May act as a chaperone-like factor to guide the assembly of the PSI subunits. The sequence is that of Photosystem I assembly protein Ycf3 from Trichodesmium erythraeum (strain IMS101).